An 85-amino-acid chain; its full sequence is Alpha-mammal toxin AaH2 (85 aa).

The N-terminal stretch at 1–19 (MNYLVMISLALLFVTGVES) is a signal peptide. The LCN-type CS-alpha/beta domain occupies 21–83 (KDGYIVDDVN…VRTKGPGRCH (63 aa)). Disulfide bonds link C31-C82, C35-C55, C41-C65, and C45-C67. H83 carries the histidine amide modification.

This sequence belongs to the long (4 C-C) scorpion toxin superfamily. Sodium channel inhibitor family. Alpha subfamily. In terms of processing, the amidation of His-83 is not necessary for toxicity. In terms of tissue distribution, expressed by the venom gland.

Its subcellular location is the secreted. Functionally, alpha toxin that binds voltage-independently at site-3 of sodium channels (Nav), inhibits the inactivation of the activated channels, and weakly inhibits activation, thereby blocking neuronal transmission. Inserts into voltage-sensing domain IV to stabilize a deactivated state, thereby preventing fast-inactivation. Principally slows the inactivation process of TTX-sensitive sodium channels. It is active on mammalian brain Nav1.2/SCN2A (EC(50)human=0.72 nM, EC(50)rat=2.6 nM), on rat skeletal muscle Nav1.4/SCN4A (EC(50)=2.2 nM), and on human neuronal Nav1.7/SCN9A (EC(50)=6.8-51.7 nM). In vivo, intraplantar injection into mice induces spontaneous pain responses. The protein is Alpha-mammal toxin AaH2 of Androctonus australis (Sahara scorpion).